The chain runs to 140 residues: Nucleoside diphosphate kinase (140 aa).

The ATP site is built by Lys11, Phe59, Arg87, Thr93, Arg104, and Asn114. The Pros-phosphohistidine intermediate role is filled by His117.

The protein belongs to the NDK family. In terms of assembly, homotetramer. It depends on Mg(2+) as a cofactor.

Its subcellular location is the cytoplasm. The enzyme catalyses a 2'-deoxyribonucleoside 5'-diphosphate + ATP = a 2'-deoxyribonucleoside 5'-triphosphate + ADP. It catalyses the reaction a ribonucleoside 5'-diphosphate + ATP = a ribonucleoside 5'-triphosphate + ADP. In terms of biological role, major role in the synthesis of nucleoside triphosphates other than ATP. The ATP gamma phosphate is transferred to the NDP beta phosphate via a ping-pong mechanism, using a phosphorylated active-site intermediate. The polypeptide is Nucleoside diphosphate kinase (Granulibacter bethesdensis (strain ATCC BAA-1260 / CGDNIH1)).